The sequence spans 558 residues: Membrane protein insertase YidC (558 aa).

5 helical membrane passes run 3-23, 364-384, 438-458, 477-497, and 508-528; these read IKRTVLWVIFFMSAVMLFDNW, FVGNWGWAIVLLTLLIKAVFF, LPVVIQIPVFISLYWVLLASV, PYFILPVLMAVSMFVQTKLNP, and MMFMPIAFSVMFFFFPAGLVL.

Belongs to the OXA1/ALB3/YidC family. Type 1 subfamily. In terms of assembly, interacts with the Sec translocase complex via SecD. Specifically interacts with transmembrane segments of nascent integral membrane proteins during membrane integration.

It is found in the cell inner membrane. Required for the insertion and/or proper folding and/or complex formation of integral membrane proteins into the membrane. Involved in integration of membrane proteins that insert both dependently and independently of the Sec translocase complex, as well as at least some lipoproteins. Aids folding of multispanning membrane proteins. In Burkholderia mallei (strain NCTC 10247), this protein is Membrane protein insertase YidC.